A 186-amino-acid polypeptide reads, in one-letter code: CASP-like protein ARALYDRAFT_316979 (186 aa).

At 1–23 (MRRNGDGEEVVAKRRRRIKELVQ) the chain is on the cytoplasmic side. Residues 24-44 (VALRGGCLAASATAMAVMLTA) traverse the membrane as a helical segment. Topologically, residues 45–70 (TEEGVADIYGFKLTLSSNWSFSPSYQ) are extracellular. Asn62 is a glycosylation site (N-linked (GlcNAc...) asparagine). The chain crosses the membrane as a helical span at residues 71 to 91 (YVVGACTGTVLYSLFQLCLGV). Over 92–115 (YRLLTGSPITPSRFQAWLCFTSDQ) the chain is Cytoplasmic. The chain crosses the membrane as a helical span at residues 116 to 132 (LFGYLMMSAGSAGSGVT). Over 133–161 (NLNKTGIRHTPLPDFCKTLSSFCNHVALS) the chain is Extracellular. Asn135 is a glycosylation site (N-linked (GlcNAc...) asparagine). The helical transmembrane segment at 162–182 (LLLVFLSFIFLASSSFFTVLV) threads the bilayer. The Cytoplasmic portion of the chain corresponds to 183-186 (LSTP).

Belongs to the Casparian strip membrane proteins (CASP) family. Homodimer and heterodimers.

Its subcellular location is the cell membrane. The polypeptide is CASP-like protein ARALYDRAFT_316979 (Arabidopsis lyrata subsp. lyrata (Lyre-leaved rock-cress)).